Consider the following 95-residue polypeptide: Small ribosomal subunit protein bS6 (95 aa).

Belongs to the bacterial ribosomal protein bS6 family.

Its function is as follows. Binds together with bS18 to 16S ribosomal RNA. The chain is Small ribosomal subunit protein bS6 from Caldanaerobacter subterraneus subsp. tengcongensis (strain DSM 15242 / JCM 11007 / NBRC 100824 / MB4) (Thermoanaerobacter tengcongensis).